The following is a 525-amino-acid chain: Polyamine aminopropyltransferase 1 (525 aa).

The next 6 membrane-spanning stretches (helical) occupy residues 21–41 (ALLV…ELIA), 53–73 (ILQF…GSWV), 89–109 (LELL…LLFA), 117–137 (LVLY…IPLV), 155–175 (VLTF…LVLA), and 180–200 (LVRT…WTLW). Positions 220-464 (AGMVGAALLA…GEWGFILAAP (245 aa)) constitute a PABS domain. The spermidine synthase stretch occupies residues 222-471 (MVGAALLAGF…AAPGRADFRP (250 aa)). Glutamine 259 serves as a coordination point for S-methyl-5'-thioadenosine. Histidine 289 and aspartate 313 together coordinate spermidine. S-methyl-5'-thioadenosine-binding positions include aspartate 333 and 367–368 (DA). Residue aspartate 385 is the Proton acceptor of the active site.

It belongs to the spermidine/spermine synthase family. In terms of assembly, homodimer or homotetramer.

The protein resides in the cell membrane. The enzyme catalyses S-adenosyl 3-(methylsulfanyl)propylamine + putrescine = S-methyl-5'-thioadenosine + spermidine + H(+). The protein operates within amine and polyamine biosynthesis; spermidine biosynthesis; spermidine from putrescine: step 1/1. Catalyzes the irreversible transfer of a propylamine group from the amino donor S-adenosylmethioninamine (decarboxy-AdoMet) to putrescine (1,4-diaminobutane) to yield spermidine. This is Polyamine aminopropyltransferase 1 from Ralstonia nicotianae (strain ATCC BAA-1114 / GMI1000) (Ralstonia solanacearum).